Reading from the N-terminus, the 132-residue chain is Small ribosomal subunit protein uS11 (132 aa).

Belongs to the universal ribosomal protein uS11 family. In terms of assembly, part of the 30S ribosomal subunit. Interacts with proteins S7 and S18. Binds to IF-3.

Its function is as follows. Located on the platform of the 30S subunit, it bridges several disparate RNA helices of the 16S rRNA. Forms part of the Shine-Dalgarno cleft in the 70S ribosome. This chain is Small ribosomal subunit protein uS11, found in Dichelobacter nodosus (strain VCS1703A).